A 349-amino-acid polypeptide reads, in one-letter code: MNIQQALNHITKNIHLTQPQMEEIMRSIMQGEATEAQIGALMMGLRMKGESIDEMTAAARVMREFAIKIDVSDIKHLVDIVGTGGDGQNLFNVSTASSFVIAAAGATIAKHGNRGVSSKSGSSDLLEQAGIHLDLDMQQTERCIREMGVGFLFAPNHHKAMKYAAGPRRELGIRSIFNLLGPLTNPAGVKRFVIGVFSDELCRPIAEVMKQLGAEHVMVVHSKDGLDEISLAAPTTIAELKDGEITEWTLNPEDVGIESQTLNGLVVADATASLKLIKDALSKNKSDIGEKAANMIALNAGAGIYVAGITKTYAQAVVFAQDIIYGGQTLEKMSVLAEFTKTLKQSQAD.

5-phospho-alpha-D-ribose 1-diphosphate contacts are provided by residues Gly82, 85-86, 92-95, 110-118, and Ser122; these read GD, NVST, and KHGNRGVSS. Gly82 provides a ligand contact to anthranilate. Position 94 (Ser94) interacts with Mg(2+). Residue Asn113 coordinates anthranilate. Anthranilate is bound at residue Arg168. Asp227 and Glu228 together coordinate Mg(2+).

Belongs to the anthranilate phosphoribosyltransferase family. Homodimer. Requires Mg(2+) as cofactor.

It carries out the reaction N-(5-phospho-beta-D-ribosyl)anthranilate + diphosphate = 5-phospho-alpha-D-ribose 1-diphosphate + anthranilate. The protein operates within amino-acid biosynthesis; L-tryptophan biosynthesis; L-tryptophan from chorismate: step 2/5. Catalyzes the transfer of the phosphoribosyl group of 5-phosphorylribose-1-pyrophosphate (PRPP) to anthranilate to yield N-(5'-phosphoribosyl)-anthranilate (PRA). The polypeptide is Anthranilate phosphoribosyltransferase (Acinetobacter baumannii (strain SDF)).